Here is a 58-residue protein sequence, read N- to C-terminus: Light-harvesting protein B-875 alpha chain (58 aa).

At Met1 to Arg15 the chain is on the cytoplasmic side. Residues Val16 to Leu36 form a helical membrane-spanning segment. His32 contributes to the a bacteriochlorophyll binding site. The Periplasmic segment spans residues Ser37–Glu58.

It belongs to the antenna complex alpha subunit family. The core complex is formed by different alpha and beta chains, binding bacteriochlorophyll molecules, and arranged most probably in tetrameric structures disposed around the reaction center. The non-pigmented gamma chains may constitute additional components.

Its subcellular location is the cell inner membrane. Its function is as follows. Antenna complexes are light-harvesting systems, which transfer the excitation energy to the reaction centers. The chain is Light-harvesting protein B-875 alpha chain (pufA) from Cereibacter sphaeroides (strain ATCC 17023 / DSM 158 / JCM 6121 / CCUG 31486 / LMG 2827 / NBRC 12203 / NCIMB 8253 / ATH 2.4.1.) (Rhodobacter sphaeroides).